The sequence spans 91 residues: Lipolysis-activating peptide 1-alpha chain (91 aa).

Positions 1 to 21 are cleaved as a signal peptide; sequence MNIKLFCFLSILISLTGLSLS. In terms of domain architecture, LCN-type CS-alpha/beta spans 23–87; the sequence is DDGNYPIDAN…FFDAYKTYCK (65 aa). Intrachain disulfides connect C38–C61, C47–C66, and C51–C68.

Belongs to the long (3 C-C) scorpion toxin superfamily. In terms of assembly, heterodimer of this alpha chain and a beta chain (AC D9U2A2). In terms of tissue distribution, expressed by the venom gland.

It localises to the secreted. The heterodimer LVP1 induces lipolysis in rat adipocytes. Induction of lipolysis by LVP1 appears to be mediated through the beta-2 adrenergic receptor pathway (ADRB2). This chain is Lipolysis-activating peptide 1-alpha chain, found in Lychas mucronatus (Chinese swimming scorpion).